A 393-amino-acid chain; its full sequence is Mitogen-activated protein kinase 10 (393 aa).

The Protein kinase domain occupies 60–345; the sequence is KPPIRPIGRG…VKEALAHPYL (286 aa). ATP is bound by residues 66 to 74 and Lys89; that span reads IGRGACGIV. The Proton acceptor role is filled by Asp186. Thr218 carries the post-translational modification Phosphothreonine. Positions 218-220 match the TXY motif; the sequence is TEY. Phosphotyrosine is present on Tyr220. Residue Thr223 is modified to Phosphothreonine.

It belongs to the protein kinase superfamily. CMGC Ser/Thr protein kinase family. MAP kinase subfamily. As to quaternary structure, interacts with MKK2. Post-translationally, dually phosphorylated on Thr-218 and Tyr-220, which activates the enzyme.

The enzyme catalyses L-seryl-[protein] + ATP = O-phospho-L-seryl-[protein] + ADP + H(+). The catalysed reaction is L-threonyl-[protein] + ATP = O-phospho-L-threonyl-[protein] + ADP + H(+). With respect to regulation, activated by threonine and tyrosine phosphorylation. This chain is Mitogen-activated protein kinase 10 (MPK10), found in Arabidopsis thaliana (Mouse-ear cress).